Here is a 108-residue protein sequence, read N- to C-terminus: Ig kappa chain V-V region NQ5-89.4 (108 aa).

The framework-1 stretch occupies residues 1–23 (DIQMTQTTSSLSASLGHRVTITC). Cys-23 and Cys-88 are oxidised to a cystine. A complementarity-determining-1 region spans residues 24 to 34 (SASQDISNYLN). The segment at 35–49 (WYQQKPDGTVKLLIY) is framework-2. The interval 50 to 56 (YTSRLHS) is complementarity-determining-2. Residues 57–88 (GVPSRFSGSGSATDYSLTITNLQQEDXATYXC) are framework-3. Residues 89–97 (QQGNTLPYT) are complementarity-determining-3. Residues 98-107 (FGGGTKLXIK) form a framework-4 region.

In terms of biological role, anti-2-phenyl oxazolone (PHOX) Antibody. This Mus musculus (Mouse) protein is Ig kappa chain V-V region NQ5-89.4.